The following is a 444-amino-acid chain: MREIVLTQAGQCGNQIGAKFWEVISDEHAIDSAGTYHGDSRLQLERIDVYYNEACGGRYVPRAVLVDLEPGTLDSVRSGPFGQIFRPDSFIFGQCGAGNNWAKGHYTEGAELMESVMDVVRKEAESCDCLQGFQLTHSLGGGTGSGMGTLLLSKIREEYPDRIINTFSILPSPKVSDTVVEPYNATLSVHQLIENADETFCIDNEALYDICSRTLKLPTPTYGDLNHLVSATMSGVTTCLRFPGQLNADLRKLAVNMVPFPRLHFFMPGFAPLTSRGSQQYRALTVAELTQQMFDARNMMAACDPRHGRYLTAAAIFRGRMPMREVDEQMFNIQNKNSSYFADWLPHNVKTAVCDIPPRGLKMSATFIGNNTAIQELFKRVSEQFTAMFRRKAFLHWYTGEGMDEMEFTEAESNMNDLVSEYQQYQDATAEEEEFEEYAEEEEA.

The MREI motif motif lies at methionine 1–isoleucine 4. The GTP site is built by glutamine 11, glutamate 69, serine 138, glycine 142, threonine 143, and glycine 144. Glutamate 69 is a Mg(2+) binding site. Serine 172 bears the Phosphoserine; by CDK1 mark. Residues asparagine 204 and asparagine 226 each contribute to the GTP site. At glutamate 436 the chain carries 5-glutamyl polyglutamate.

Belongs to the tubulin family. Dimer of alpha and beta chains. A typical microtubule is a hollow water-filled tube with an outer diameter of 25 nm and an inner diameter of 15 nM. Alpha-beta heterodimers associate head-to-tail to form protofilaments running lengthwise along the microtubule wall with the beta-tubulin subunit facing the microtubule plus end conferring a structural polarity. Microtubules usually have 13 protofilaments but different protofilament numbers can be found in some organisms and specialized cells. Requires Mg(2+) as cofactor. Some glutamate residues at the C-terminus are polyglycylated, resulting in polyglycine chains on the gamma-carboxyl group. Glycylation is mainly limited to tubulin incorporated into axonemes (cilia and flagella) whereas glutamylation is prevalent in neuronal cells, centrioles, axonemes, and the mitotic spindle. Both modifications can coexist on the same protein on adjacent residues, and lowering polyglycylation levels increases polyglutamylation, and reciprocally. Cilia and flagella glycylation is required for their stability and maintenance. Flagella glycylation controls sperm motility. Post-translationally, some glutamate residues at the C-terminus are polyglutamylated, resulting in polyglutamate chains on the gamma-carboxyl group. Polyglutamylation plays a key role in microtubule severing by spastin (SPAST). SPAST preferentially recognizes and acts on microtubules decorated with short polyglutamate tails: severing activity by SPAST increases as the number of glutamates per tubulin rises from one to eight, but decreases beyond this glutamylation threshold. Glutamylation is also involved in cilia motility. In terms of processing, phosphorylated on Ser-172 by CDK1 during the cell cycle, from metaphase to telophase, but not in interphase. This phosphorylation inhibits tubulin incorporation into microtubules.

It is found in the cytoplasm. Its subcellular location is the cytoskeleton. The protein resides in the spindle. In terms of biological role, tubulin is the major constituent of microtubules, a cylinder consisting of laterally associated linear protofilaments composed of alpha- and beta-tubulin heterodimers. Microtubules grow by the addition of GTP-tubulin dimers to the microtubule end, where a stabilizing cap forms. Below the cap, tubulin dimers are in GDP-bound state, owing to GTPase activity of alpha-tubulin. Has a key role in meiotic spindle assembly and oocyte maturation. The polypeptide is Tubulin beta-8 chain (TUBB8) (Papio hamadryas (Hamadryas baboon)).